The following is a 119-amino-acid chain: Immunoglobulin heavy variable 2-70D (119 aa).

An N-terminal signal peptide occupies residues 1 to 19 (MDILCSTLLLLTVPSWVLS). At Gln-20 the chain carries Pyrrolidone carboxylic acid. A framework-1 region spans residues 20-44 (QVTLKESGPALVKPTQTLTLTCTFS). Residues 20–119 (QVTLKESGPA…DTATYYCARI (100 aa)) form the Ig-like domain. A disulfide bridge links Cys-41 with Cys-116. Residues 45–54 (GFSLSTSGMR) form a complementarity-determining-1 region. The framework-2 stretch occupies residues 55–71 (VSWIRQPPGKALEWLAR). The segment at 72–78 (IDWDDDK) is complementarity-determining-2. A framework-3 region spans residues 79–116 (FYSTSLKTRLTISKDTSKNQVVLTMTNMDPVDTATYYC). A complementarity-determining-3 region spans residues 117–119 (ARI).

As to quaternary structure, immunoglobulins are composed of two identical heavy chains and two identical light chains; disulfide-linked.

The protein localises to the secreted. Its subcellular location is the cell membrane. V region of the variable domain of immunoglobulin heavy chains that participates in the antigen recognition. Immunoglobulins, also known as antibodies, are membrane-bound or secreted glycoproteins produced by B lymphocytes. In the recognition phase of humoral immunity, the membrane-bound immunoglobulins serve as receptors which, upon binding of a specific antigen, trigger the clonal expansion and differentiation of B lymphocytes into immunoglobulins-secreting plasma cells. Secreted immunoglobulins mediate the effector phase of humoral immunity, which results in the elimination of bound antigens. The antigen binding site is formed by the variable domain of one heavy chain, together with that of its associated light chain. Thus, each immunoglobulin has two antigen binding sites with remarkable affinity for a particular antigen. The variable domains are assembled by a process called V-(D)-J rearrangement and can then be subjected to somatic hypermutations which, after exposure to antigen and selection, allow affinity maturation for a particular antigen. This is Immunoglobulin heavy variable 2-70D from Homo sapiens (Human).